The following is a 147-amino-acid chain: 18 kDa antigen 1 (147 aa).

One can recognise a sHSP domain in the interval 21-131 (TPTRPAVMPM…RPRKIAVGAA (111 aa)).

Belongs to the small heat shock protein (HSP20) family.

In terms of biological role, not known. This protein is one of the major immune reactive proteins in mycobacteria. The polypeptide is 18 kDa antigen 1 (Mycobacterium avium).